Here is a 326-residue protein sequence, read N- to C-terminus: Pyruvate dehydrogenase E1 component subunit beta (326 aa).

E62 lines the thiamine diphosphate pocket.

Heterodimer of an alpha and a beta chain. It depends on thiamine diphosphate as a cofactor.

It carries out the reaction N(6)-[(R)-lipoyl]-L-lysyl-[protein] + pyruvate + H(+) = N(6)-[(R)-S(8)-acetyldihydrolipoyl]-L-lysyl-[protein] + CO2. The pyruvate dehydrogenase complex catalyzes the overall conversion of pyruvate to acetyl-CoA and CO(2). It contains multiple copies of three enzymatic components: pyruvate dehydrogenase (E1), dihydrolipoamide acetyltransferase (E2) and lipoamide dehydrogenase (E3). The polypeptide is Pyruvate dehydrogenase E1 component subunit beta (pdhB) (Mycoplasma genitalium (strain ATCC 33530 / DSM 19775 / NCTC 10195 / G37) (Mycoplasmoides genitalium)).